A 451-amino-acid polypeptide reads, in one-letter code: Opioid growth factor receptor-like protein 1 (451 aa).

Disordered stretches follow at residues 1 to 89 (MGNL…TAKP) and 308 to 451 (ENFI…VLVQ). Low complexity predominate over residues 43–66 (PGQESEQPAQPPEQAGGRPGASPA). A compositionally biased stretch (polar residues) spans 322–341 (GSKAQKMSSPLASSHNSQTS). 2 stretches are compositionally biased toward basic and acidic residues: residues 362–381 (TAED…DRPS) and 389–399 (AKPRNTEKDSN). A compositionally biased stretch (low complexity) spans 431–443 (NDNQDNENPGNTN).

The protein belongs to the opioid growth factor receptor family. As to expression, ubiquitous.

This is Opioid growth factor receptor-like protein 1 (OGFRL1) from Homo sapiens (Human).